We begin with the raw amino-acid sequence, 210 residues long: Lysine N-acyltransferase MbtK (210 aa).

H130 lines the substrate pocket. Catalysis depends on D168, which acts as the Proton acceptor.

It belongs to the lysine N-acyltransferase MbtK family. As to quaternary structure, monomer.

The protein operates within siderophore biosynthesis; mycobactin biosynthesis. Its function is as follows. Acyltransferase required for the direct transfer of medium- to long-chain fatty acyl moieties from a carrier protein (MbtL) on to the epsilon-amino group of lysine residue in the mycobactin core. This Mycobacterium tuberculosis (strain CDC 1551 / Oshkosh) protein is Lysine N-acyltransferase MbtK (mbtK).